Here is a 68-residue protein sequence, read N- to C-terminus: ATP synthase subunit K, mitochondrial (68 aa).

A helical membrane pass occupies residues 15-31 (HQLAIGTLGLLGLLVVP).

This sequence belongs to the ATP19 family. As to quaternary structure, F-type ATPases have 2 components, CF(1) - the catalytic core - and CF(0) - the membrane proton channel. In yeast, the dimeric form of ATP synthase consists of 17 polypeptides: alpha, beta, gamma, delta, epsilon, 4 (B), 5 (OSCP), 6 (A), 8, 9 (C), d, E (Tim11), f, g, h, i/j and k.

Its subcellular location is the mitochondrion inner membrane. Functionally, mitochondrial membrane ATP synthase (F(1)F(0) ATP synthase or Complex V) produces ATP from ADP in the presence of a proton gradient across the membrane which is generated by electron transport complexes of the respiratory chain. F-type ATPases consist of two structural domains, F(1) - containing the extramembraneous catalytic core and F(0) - containing the membrane proton channel, linked together by a central stalk and a peripheral stalk. During catalysis, ATP synthesis in the catalytic domain of F(1) is coupled via a rotary mechanism of the central stalk subunits to proton translocation. Part of the complex F(0) domain. Minor subunit located with subunit a in the membrane. The K chain binds the dimeric form by interacting with the G and E chains. In Saccharomyces cerevisiae (strain ATCC 204508 / S288c) (Baker's yeast), this protein is ATP synthase subunit K, mitochondrial (ATP19).